We begin with the raw amino-acid sequence, 219 residues long: Putative protease Do-like 6, chloroplastic (219 aa).

The N-terminal 45 residues, 1–45 (MLFRSVHHIVARFSNSTSTPIHRFFYSPSLLRRRSSFNASLISRC), are a transit peptide targeting the chloroplast. Residues 61 to 216 (KIFSFSREPN…YSGQINKKIY (156 aa)) form a serine protease region. Active-site charge relay system residues include H99, D130, and S208.

The protein belongs to the peptidase S1B family.

It is found in the plastid. Its subcellular location is the chloroplast. Its function is as follows. Putative serine protease. This Arabidopsis thaliana (Mouse-ear cress) protein is Putative protease Do-like 6, chloroplastic (DEGP6).